The primary structure comprises 255 residues: Putative cysteine-rich repeat secretory protein 13 (255 aa).

Positions Met-1–Ser-21 are cleaved as a signal peptide. Gnk2-homologous domains lie at Tyr-28–Thr-136 and Tyr-142–Phe-252.

This sequence belongs to the cysteine-rich repeat secretory protein family.

It localises to the secreted. The polypeptide is Putative cysteine-rich repeat secretory protein 13 (CRRSP13) (Arabidopsis thaliana (Mouse-ear cress)).